Here is a 429-residue protein sequence, read N- to C-terminus: Adenylosuccinate synthetase (429 aa).

GTP contacts are provided by residues 15–21 and 43–45; these read GDEGKGK and GHV. The active-site Proton acceptor is Asp16. Mg(2+)-binding residues include Asp16 and Gly43. IMP is bound by residues 16-19, 41-44, Thr131, Arg145, Gln225, Thr240, and Arg304; these read DEGK and NAGH. The active-site Proton donor is the His44. Residue 300 to 306 participates in substrate binding; it reads SNTKRPR. Residues Arg306, 332–334, and 414–416 contribute to the GTP site; these read LLD and SVG.

This sequence belongs to the adenylosuccinate synthetase family. In terms of assembly, homodimer. Requires Mg(2+) as cofactor.

It localises to the cytoplasm. The enzyme catalyses IMP + L-aspartate + GTP = N(6)-(1,2-dicarboxyethyl)-AMP + GDP + phosphate + 2 H(+). The protein operates within purine metabolism; AMP biosynthesis via de novo pathway; AMP from IMP: step 1/2. Plays an important role in the de novo pathway of purine nucleotide biosynthesis. Catalyzes the first committed step in the biosynthesis of AMP from IMP. This Mesoplasma florum (strain ATCC 33453 / NBRC 100688 / NCTC 11704 / L1) (Acholeplasma florum) protein is Adenylosuccinate synthetase.